Consider the following 142-residue polypeptide: Transmembrane protein 170A (142 aa).

Topologically, residues 1–48 (MEGGGGGLGGEPGLLQQILSLRLVPRVGNVTDCQRATLCSFPEMWYGV) are lumenal. N29 carries N-linked (GlcNAc...) asparagine glycosylation. Residues 49-69 (FLWALVSSLFFHIPAGLLALF) form a helical membrane-spanning segment. The Cytoplasmic segment spans residues 70–78 (TLRHHKYGR). Residues 79–99 (FMSVGIFLMGVLGPISAGILT) form a helical membrane-spanning segment. Residues 100–114 (SAAIAGVYKAAGKEM) are Lumenal-facing. Residues 115 to 135 (IPFEALVLGVGQTFCVLIVSF) form a helical membrane-spanning segment. Residues 136-142 (LRILATL) lie on the Cytoplasmic side of the membrane.

It belongs to the TMEM170 family.

It is found in the endoplasmic reticulum membrane. Its subcellular location is the nucleus envelope. May regulate membrane morphogenesis in the endoplasmic reticulum (ER) by promoting ER sheet formation at the expense of ER tubules. This is Transmembrane protein 170A (tmem170a) from Xenopus laevis (African clawed frog).